The following is a 150-amino-acid chain: Galactose-binding lectin (150 aa).

Residues His-16 and Gly-19 each coordinate D-galactose. An N-linked (GlcNAc...) asparagine glycan is attached at Asn-26. D-galactose is bound by residues Asp-27, 35–37 (DIH), His-64, and Gly-67. An N-linked (GlcNAc...) asparagine glycan is attached at Asn-74. Residues Glu-75, 83–85 (DRH), His-108, and Gly-111 contribute to the D-galactose site. The N-linked (GlcNAc...) asparagine glycan is linked to Asn-118. Residues Glu-119 and 127-129 (DKH) each bind D-galactose.

Homodimer. Likely to form large oligomers; oligomerization enhances hemagglutination activity. Post-translationally, glycosylated.

Its activity is regulated as follows. Hemagglutination activity is not dependent on divalent cations. Hemagglutination activity is highly inhibited by D-galactose and N-acetyl-D-galactosamine, and to a lesser extent by raffinose. Also inhibited by melibiose and alpha-lactose, but not by beta-lactose or D-glucose. In terms of biological role, D-galactose-binding lectin. Also binds N-acetyl-D-galactosamine. Has hemagglutination activity towards all types of human erythrocytes (O, A and B) and rabbit erythrocytes. Agglutinates Gram-negative and Gram-positive bacteria including E.coli DH5-alpha and L.plantarum ATCC8014, respectively, and has bacteriostatic activity against them. Also agglutinates M.lysodeikticus. May be involved in innate immunity by recognizing and eliminating pathogens. This is Galactose-binding lectin from Mytilus californianus (California mussel).